A 308-amino-acid chain; its full sequence is Glutamyl-Q tRNA(Asp) synthetase (308 aa).

Residues 19-23 and glutamate 55 each bind L-glutamate; that span reads RFAPS. A 'HIGH' region motif is present at residues 22-32; that stretch reads PSPSGELHFGS. 4 residues coordinate Zn(2+): cysteine 111, cysteine 113, tyrosine 125, and cysteine 129. Positions 182 and 200 each coordinate L-glutamate. The 'KMSKS' region motif lies at 238-242; the sequence is KLSKQ. Lysine 241 is an ATP binding site.

It belongs to the class-I aminoacyl-tRNA synthetase family. GluQ subfamily. It depends on Zn(2+) as a cofactor.

In terms of biological role, catalyzes the tRNA-independent activation of glutamate in presence of ATP and the subsequent transfer of glutamate onto a tRNA(Asp). Glutamate is transferred on the 2-amino-5-(4,5-dihydroxy-2-cyclopenten-1-yl) moiety of the queuosine in the wobble position of the QUC anticodon. In Escherichia coli O157:H7, this protein is Glutamyl-Q tRNA(Asp) synthetase.